Consider the following 442-residue polypeptide: Putative ammonium transporter sll1017 (442 aa).

The next 13 helical transmembrane spans lie at 5–25, 44–64, 81–101, 104–124, 133–153, 155–175, 193–213, 240–260, 269–289, 299–319, 325–345, 354–374, and 386–406; these read NFPL…VGVA, LFLL…AMLE, TFDV…LMYG, PVLG…LDNV, WLFQ…AVMG, MYFK…YPIS, FAGS…AVVV, GVFI…LAFV, MLIA…ALAF, PNLL…TAGC, WSAI…TKLL, VGAW…VGIF, and IVGS…LFYV.

This sequence belongs to the ammonia transporter channel (TC 1.A.11.2) family.

It localises to the cell membrane. This chain is Putative ammonium transporter sll1017, found in Synechocystis sp. (strain ATCC 27184 / PCC 6803 / Kazusa).